The chain runs to 544 residues: Chaperonin GroEL 1 (544 aa).

Residues 29–32 (TLGP), 86–90 (DGTTT), glycine 413, 479–481 (NAA), and aspartate 495 contribute to the ATP site.

It belongs to the chaperonin (HSP60) family. In terms of assembly, forms a cylinder of 14 subunits composed of two heptameric rings stacked back-to-back. Interacts with the co-chaperonin GroES.

Its subcellular location is the cytoplasm. It catalyses the reaction ATP + H2O + a folded polypeptide = ADP + phosphate + an unfolded polypeptide.. Functionally, together with its co-chaperonin GroES, plays an essential role in assisting protein folding. The GroEL-GroES system forms a nano-cage that allows encapsulation of the non-native substrate proteins and provides a physical environment optimized to promote and accelerate protein folding. The sequence is that of Chaperonin GroEL 1 from Trichormus variabilis (strain ATCC 29413 / PCC 7937) (Anabaena variabilis).